The following is a 124-amino-acid chain: Biogenesis of lysosome-related organelles complex 1 subunit CNL1 (124 aa).

The disordered stretch occupies residues 1–20; sequence MMSENITAVEPQENNDVEAD. Residues 75–98 adopt a coiled-coil conformation; that stretch reads IGMAKDLLQKCDDLEKHYDQLDAV.

This sequence belongs to the BLOC1S4 family. Component of the biogenesis of lysosome-related organelles complex-1 (BLOC-1).

It is found in the cytoplasm. Component of the biogenesis of lysosome-related organelles complex-1 (BLOC-1), a complex that is involved in endosomal cargo sorting. The chain is Biogenesis of lysosome-related organelles complex 1 subunit CNL1 (CLN1) from Kluyveromyces lactis (strain ATCC 8585 / CBS 2359 / DSM 70799 / NBRC 1267 / NRRL Y-1140 / WM37) (Yeast).